The primary structure comprises 141 residues: Hemoglobin subunit alpha-1 (141 aa).

The 141-residue stretch at 1–141 (VLSPADKNNV…VSTVLTSKYR (141 aa)) folds into the Globin domain. O2 is bound at residue H58. H87 provides a ligand contact to heme b.

This sequence belongs to the globin family. In terms of assembly, heterotetramer of two alpha chains and two beta chains. Red blood cells.

Functionally, involved in oxygen transport from the lung to the various peripheral tissues. This chain is Hemoglobin subunit alpha-1, found in Varecia variegata (Black-and-white ruffed lemur).